The chain runs to 974 residues: Bifunctional glutamine synthetase adenylyltransferase/adenylyl-removing enzyme (974 aa).

Residues 1–464 are adenylyl removase; that stretch reads MKNAFLKTHL…HYAALFENEQ (464 aa). The segment at 468–974 is adenylyl transferase; the sequence is LEIGNLVFTG…CSIFKQIMKH (507 aa).

This sequence belongs to the GlnE family. Requires Mg(2+) as cofactor.

It carries out the reaction [glutamine synthetase]-O(4)-(5'-adenylyl)-L-tyrosine + phosphate = [glutamine synthetase]-L-tyrosine + ADP. The enzyme catalyses [glutamine synthetase]-L-tyrosine + ATP = [glutamine synthetase]-O(4)-(5'-adenylyl)-L-tyrosine + diphosphate. Functionally, involved in the regulation of glutamine synthetase GlnA, a key enzyme in the process to assimilate ammonia. When cellular nitrogen levels are high, the C-terminal adenylyl transferase (AT) inactivates GlnA by covalent transfer of an adenylyl group from ATP to specific tyrosine residue of GlnA, thus reducing its activity. Conversely, when nitrogen levels are low, the N-terminal adenylyl removase (AR) activates GlnA by removing the adenylyl group by phosphorolysis, increasing its activity. The regulatory region of GlnE binds the signal transduction protein PII (GlnB) which indicates the nitrogen status of the cell. This is Bifunctional glutamine synthetase adenylyltransferase/adenylyl-removing enzyme from Bartonella quintana (strain Toulouse) (Rochalimaea quintana).